A 190-amino-acid chain; its full sequence is Potassium-transporting ATPase KdpC subunit (190 aa).

The chain crosses the membrane as a helical span at residues 11 to 31 (LIVLMSLITGVAYPLVVTGVA).

This sequence belongs to the KdpC family. In terms of assembly, the system is composed of three essential subunits: KdpA, KdpB and KdpC.

The protein resides in the cell inner membrane. Functionally, part of the high-affinity ATP-driven potassium transport (or Kdp) system, which catalyzes the hydrolysis of ATP coupled with the electrogenic transport of potassium into the cytoplasm. This subunit acts as a catalytic chaperone that increases the ATP-binding affinity of the ATP-hydrolyzing subunit KdpB by the formation of a transient KdpB/KdpC/ATP ternary complex. This Pseudomonas savastanoi pv. phaseolicola (strain 1448A / Race 6) (Pseudomonas syringae pv. phaseolicola (strain 1448A / Race 6)) protein is Potassium-transporting ATPase KdpC subunit.